We begin with the raw amino-acid sequence, 427 residues long: O-methyltransferase PaMT (427 aa).

2 residues coordinate S-adenosyl-L-methionine: W230 and D281. H326 functions as the Proton acceptor in the catalytic mechanism.

It belongs to the class I-like SAM-binding methyltransferase superfamily. Cation-independent O-methyltransferase family. COMT subfamily. S-adenosyl-L-methionine serves as cofactor.

The protein operates within mycotoxin biosynthesis. In terms of biological role, O-methyltransferase; part of the 2 gene clusters that mediate the biosynthesis of fusicoccins, diterpene glucosides that display phytohormone-like activity and function as potent activators of plasma membrane H(+)-ATPases in plants by modifying 14-3-3 proteins and cause the plant disease constriction canker. The first step in the pathway is performed by the fusicoccadiene synthase PaFS that possesses both prenyl transferase and terpene cyclase activity, converting isopentenyl diphosphate and dimethylallyl diphosphate into geranylgeranyl diphosphate (GGDP) and successively converting GGDP into fusicocca-2,10(14)-diene, a precursor for fusicoccin H. The second step is the oxidation at the C-8 position by the cytochrome P450 monooxygenase PaP450-2 to yield fusicocca-2,10(14)-diene-8-beta-ol. The cytochrome P450 monooxygenase PaP450-1 then catalyzes the hydroxylation at the C-16 position to produce fusicocca-2,10(14)-diene-8-beta,16-diol. The dioxygenase fc-dox then catalyzes the 16-oxydation of fusicocca-2,10(14)-diene-8-beta,16-diol to yield an aldehyde (8-beta-hydroxyfusicocca-1,10(14)-dien-16-al). The short-chain dehydrogenase/reductase fc-sdr catalyzes the reduction of the aldehyde to yield fusicocca-1,10(14)-diene-8-beta,16-diol. The next step is the hydroxylation at C-9 performed by the cytochrome P450 monooxygenase PaP450-3 that leads to fusicoccin H aglycon which is glycosylated to fusicoccin H by the O-glycosyltransferase PaGT. Hydroxylation at C-12 by the cytochrome P450 monooxygenase PaP450-4 leads then to the production of fusicoccin Q and is followed by methylation by the O-methyltransferase PaMT to yield fusicoccin P. Fusicoccin P is further converted to fusicoccin J via prenylation by the O-glucose prenyltransferase PaPT. Cytochrome P450 monooxygenase PaP450-5 then performs hydroxylation at C-19 to yield dideacetyl-fusicoccin A which is acetylated to 3'-O-deacetyl-fusicoccin A by the O-acetyltransferase PaAT-2. Finally, a another acetylation by the O-acetyltransferase PaAT-1 yields fusicoccin A. The chain is O-methyltransferase PaMT from Phomopsis amygdali (Fusicoccum amygdali).